The sequence spans 338 residues: Ketol-acid reductoisomerase (NADP(+)) (338 aa).

Residues 1–181 (MKVYYDKDCD…GGGRTGIIET (181 aa)) form the KARI N-terminal Rossmann domain. Residues 24-27 (YGSQ), arginine 47, serine 50, threonine 52, and 82-85 (DEFQ) contribute to the NADP(+) site. The active site involves histidine 107. Glycine 133 is an NADP(+) binding site. In terms of domain architecture, KARI C-terminal knotted spans 182–327 (TFKDETETDL…EQLRSMMPWI (146 aa)). Aspartate 190, glutamate 194, glutamate 226, and glutamate 230 together coordinate Mg(2+). Serine 251 contacts substrate.

This sequence belongs to the ketol-acid reductoisomerase family. Mg(2+) serves as cofactor.

It catalyses the reaction (2R)-2,3-dihydroxy-3-methylbutanoate + NADP(+) = (2S)-2-acetolactate + NADPH + H(+). The catalysed reaction is (2R,3R)-2,3-dihydroxy-3-methylpentanoate + NADP(+) = (S)-2-ethyl-2-hydroxy-3-oxobutanoate + NADPH + H(+). It participates in amino-acid biosynthesis; L-isoleucine biosynthesis; L-isoleucine from 2-oxobutanoate: step 2/4. The protein operates within amino-acid biosynthesis; L-valine biosynthesis; L-valine from pyruvate: step 2/4. Functionally, involved in the biosynthesis of branched-chain amino acids (BCAA). Catalyzes an alkyl-migration followed by a ketol-acid reduction of (S)-2-acetolactate (S2AL) to yield (R)-2,3-dihydroxy-isovalerate. In the isomerase reaction, S2AL is rearranged via a Mg-dependent methyl migration to produce 3-hydroxy-3-methyl-2-ketobutyrate (HMKB). In the reductase reaction, this 2-ketoacid undergoes a metal-dependent reduction by NADPH to yield (R)-2,3-dihydroxy-isovalerate. This is Ketol-acid reductoisomerase (NADP(+)) from Pseudomonas fluorescens (strain SBW25).